The following is a 324-amino-acid chain: Lactonase drp35 (324 aa).

Ca(2+)-binding residues include glutamate 47, serine 109, glycine 111, aspartate 129, threonine 132, tyrosine 134, aspartate 137, asparagine 184, aspartate 235, and serine 236. Catalysis depends on aspartate 235, which acts as the Proton donor.

Belongs to the SMP-30/CGR1 family. Ca(2+) serves as cofactor.

The protein localises to the cytoplasm. Exhibits lactonase activity. Acts in cells with perturbed membrane integrity and is possibly related to the membrane homeostasis. The protein is Lactonase drp35 (drp35) of Staphylococcus aureus (strain bovine RF122 / ET3-1).